The primary structure comprises 391 residues: Histidinol-phosphate aminotransferase (391 aa).

At Lys-248 the chain carries N6-(pyridoxal phosphate)lysine.

Belongs to the class-II pyridoxal-phosphate-dependent aminotransferase family. Histidinol-phosphate aminotransferase subfamily. In terms of assembly, homodimer. Pyridoxal 5'-phosphate is required as a cofactor.

It catalyses the reaction L-histidinol phosphate + 2-oxoglutarate = 3-(imidazol-4-yl)-2-oxopropyl phosphate + L-glutamate. The protein operates within amino-acid biosynthesis; L-histidine biosynthesis; L-histidine from 5-phospho-alpha-D-ribose 1-diphosphate: step 7/9. This is Histidinol-phosphate aminotransferase from Shewanella oneidensis (strain ATCC 700550 / JCM 31522 / CIP 106686 / LMG 19005 / NCIMB 14063 / MR-1).